The sequence spans 629 residues: Methyl-accepting chemotaxis protein PctB (629 aa).

Topologically, residues 1–10 (MIKSLKFSHK) are cytoplasmic. Residues 11 to 31 (ILLAAALVVIATFSLFTLYND) traverse the membrane as a helical segment. The Periplasmic segment spans residues 32–276 (SLQRASIRED…AYAMLTKLRT (245 aa)). The Cache domain maps to 37-260 (SIREDLEDYL…LSGLDWYIGI (224 aa)). Residues Tyr-109, Ser-115, Tyr-121, 126 to 128 (RPW), Glu-146, and Asp-173 contribute to the L-arginine site. Residues Ser-115, Tyr-121, 126-128 (RPW), 144-146 (YME), and Asp-173 each bind L-glutamine. A helical transmembrane segment spans residues 277 to 297 (SAIVAALIAVVAIVLLLGMLI). One can recognise an HAMP domain in the interval 298–352 (RVLMQPLTDMGRAMQDIAQGEGDLTKRLKVTSNDEFGALAISFNRFVERIHESIR). Residues 298-629 (RVLMQPLTDM…LRQLVDSFKI (332 aa)) are Cytoplasmic-facing. The Methyl-accepting transducer domain maps to 357–593 (TARQLHDVAQ…SLNMDITEIN (237 aa)). Residues 405–424 (RNAADASHHASDANHQAEDG) form a disordered region. Positions 410 to 424 (ASHHASDANHQAEDG) are enriched in basic and acidic residues.

It belongs to the methyl-accepting chemotaxis (MCP) protein family. In terms of assembly, monomer in the absence and presence of ligands.

The protein resides in the cell inner membrane. Its function is as follows. Chemotactic-signal transducers respond to changes in the concentration of attractants and repellents in the environment, transduce a signal from the outside to the inside of the cell, and facilitate sensory adaptation through the variation of the level of methylation. Responds to L-Arg, L-Gln, L-Ala, L-Glu, L-Lys, L-Met and L-Tyr. Also involved in repellent responses to trichloroethylene (TCE), chloroform and methylthiocyanate. This Pseudomonas aeruginosa (strain ATCC 15692 / DSM 22644 / CIP 104116 / JCM 14847 / LMG 12228 / 1C / PRS 101 / PAO1) protein is Methyl-accepting chemotaxis protein PctB (pctB).